The following is a 459-amino-acid chain: Cyclic GMP-AMP synthase-like receptor 2 (459 aa).

Residues Ser-68 and 79–81 (EFD) contribute to the ATP site. Glu-79, Asp-81, and Asp-199 together coordinate Mg(2+). GTP-binding positions include Asp-199 and 248 to 255 (RSSFYAVE). 252–255 (YAVE) serves as a coordination point for ATP. Position 263 (His-263) interacts with Zn(2+). Residues Lys-274 and 288–292 (SYYIK) contribute to the ATP site.

The protein belongs to the mab-21 family. Mg(2+) is required as a cofactor. The cofactor is Mn(2+).

It carries out the reaction GTP + ATP = 3',2'-cGAMP + 2 diphosphate. The enzyme catalyses GTP + ATP = 2',3'-cGAMP + 2 diphosphate. It catalyses the reaction GTP + ATP = pppGp(2'-5')A + diphosphate. The catalysed reaction is pppA(2'-5')pG = 3',2'-cGAMP + diphosphate. It carries out the reaction pppGp(2'-5')A = 2',3'-cGAMP + diphosphate. The enzyme activity is specifically activated by some nucleic acid. In terms of biological role, nucleotidyltransferase that catalyzes the formation of cyclic GMP-AMP from ATP and GTP and plays a key role in antiviral innate immunity. Directly binds some unknown nucleic acid, activating the nucleotidyltransferase activity, leading to synthesis of both 3',2'-cGAMP and 2',3'-cGAMP second messengers. 3',2'-cGAMP and 2',3'-cGAMP bind to and activate Sting, thereby triggering the antiviral immune response via activation of the NF-kappa-B transcription factor Rel (Relish). This is Cyclic GMP-AMP synthase-like receptor 2 from Drosophila melanogaster (Fruit fly).